The primary structure comprises 252 residues: 5-oxoprolinase subunit A 1 (252 aa).

Belongs to the LamB/PxpA family. As to quaternary structure, forms a complex composed of PxpA, PxpB and PxpC.

The enzyme catalyses 5-oxo-L-proline + ATP + 2 H2O = L-glutamate + ADP + phosphate + H(+). In terms of biological role, catalyzes the cleavage of 5-oxoproline to form L-glutamate coupled to the hydrolysis of ATP to ADP and inorganic phosphate. The polypeptide is 5-oxoprolinase subunit A 1 (Pseudomonas putida (strain ATCC 47054 / DSM 6125 / CFBP 8728 / NCIMB 11950 / KT2440)).